The chain runs to 130 residues: Small ribosomal subunit protein uS11 (130 aa).

This sequence belongs to the universal ribosomal protein uS11 family. As to quaternary structure, part of the 30S ribosomal subunit. Interacts with proteins S7 and S18. Binds to IF-3.

In terms of biological role, located on the platform of the 30S subunit, it bridges several disparate RNA helices of the 16S rRNA. Forms part of the Shine-Dalgarno cleft in the 70S ribosome. The protein is Small ribosomal subunit protein uS11 of Rippkaea orientalis (strain PCC 8801 / RF-1) (Cyanothece sp. (strain PCC 8801)).